Reading from the N-terminus, the 274-residue chain is Exosome complex component Rrp42 (274 aa).

The protein belongs to the RNase PH family. Rrp42 subfamily. As to quaternary structure, component of the archaeal exosome complex. Forms a hexameric ring-like arrangement composed of 3 Rrp41-Rrp42 heterodimers. The hexameric ring associates with a trimer of Rrp4 and/or Csl4 subunits.

The protein localises to the cytoplasm. In terms of biological role, non-catalytic component of the exosome, which is a complex involved in RNA degradation. Contributes to the structuring of the Rrp41 active site. In Pyrococcus horikoshii (strain ATCC 700860 / DSM 12428 / JCM 9974 / NBRC 100139 / OT-3), this protein is Exosome complex component Rrp42.